The following is a 158-amino-acid chain: Lectin-like protein EP153R (158 aa).

At 1 to 26 the chain is on the cytoplasmic side; sequence MFLNKKYPSLIEKKMDDLMTLKFCYL. The chain crosses the membrane as a helical span at residues 27 to 47; that stretch reads IITFLIITNIFSLAINIWGGG. The Extracellular segment spans residues 48 to 158; sequence DMIDRQSCEN…YTETFFICSN (111 aa). Cys61 and Cys72 are disulfide-bonded. A lectin-like region spans residues 61-157; it reads CPKDWVGYNN…KYTETFFICS (97 aa). 7 N-linked (GlcNAc...) asparagine; by host glycosylation sites follow: Asn81, Asn94, Asn100, Asn106, Asn112, Asn119, and Asn139.

It belongs to the asfivirus lectin-like protein family. As to quaternary structure, homodimer.

It is found in the host endoplasmic reticulum membrane. Functionally, down-regulates MHC-I expression by impairing the appropriate configuration or presentation into the plasma membrane of the latter. Participates in viral hemadsorption, which may help viral spread. Reduces the transactivating activity of host TP53, thus inhibiting apoptosis. Non-essential for virus growth in swine macrophage cell cultures. This chain is Lectin-like protein EP153R, found in African swine fever virus (isolate Pig/Kenya/KEN-50/1950) (ASFV).